A 36-amino-acid chain; its full sequence is Photosystem I reaction center subunit VIII (36 aa).

The chain crosses the membrane as a helical span at residues 6–28 (LPSIFVPLIGLFFPAIAMASLFL).

It belongs to the PsaI family.

It is found in the plastid. The protein localises to the chloroplast thylakoid membrane. Functionally, may help in the organization of the PsaL subunit. In Amborella trichopoda, this protein is Photosystem I reaction center subunit VIII.